Reading from the N-terminus, the 111-residue chain is BET1-like protein (111 aa).

The Cytoplasmic segment spans residues 1–86; that stretch reads MADWARAQSP…MARSGQDNRK (86 aa). Phosphoserine occurs at positions 9 and 37. The 63-residue stretch at 15-77 folds into the t-SNARE coiled-coil homology domain; that stretch reads EILDRENKRM…TGSVKRFSTM (63 aa). A helical; Anchor for type IV membrane protein membrane pass occupies residues 87-107; that stretch reads LLCGMAVGLIVAFFILSYFLS. The Lumenal portion of the chain corresponds to 108-111; that stretch reads RART.

Component of a SNARE complex consisting of STX5, YKT6, GOSR1 and BET1L. Interacts with STX5.

It is found in the golgi apparatus membrane. The protein resides in the golgi apparatus. It localises to the trans-Golgi network membrane. In terms of biological role, vesicle SNARE required for targeting and fusion of retrograde transport vesicles with the Golgi complex. Required for the integrity of the Golgi complex. This chain is BET1-like protein, found in Homo sapiens (Human).